The sequence spans 455 residues: Exodeoxyribonuclease 7 large subunit (455 aa).

This sequence belongs to the XseA family. As to quaternary structure, heterooligomer composed of large and small subunits.

The protein resides in the cytoplasm. It carries out the reaction Exonucleolytic cleavage in either 5'- to 3'- or 3'- to 5'-direction to yield nucleoside 5'-phosphates.. In terms of biological role, bidirectionally degrades single-stranded DNA into large acid-insoluble oligonucleotides, which are then degraded further into small acid-soluble oligonucleotides. The sequence is that of Exodeoxyribonuclease 7 large subunit from Oceanobacillus iheyensis (strain DSM 14371 / CIP 107618 / JCM 11309 / KCTC 3954 / HTE831).